Reading from the N-terminus, the 625-residue chain is MRTTNVWLVVIVWVTVGWSSCTGRFVVEKNNLRVTSPESIRGVYECALGNFGVPQYGGSMSGAVVYPKTNQKACKNFDDFEISFRSRVAGLPTFVLVDRGDCYFTLKAWNAQRAGAATILVADNRPEQLITMDAPEDETSDADYLQNITIPSALVSRSLGSAIKTAIAHGDPVHISLDWREALPHPNDRVAYELWTNSNDECGSKCDAQIRFLKRFKGAAQILEKGGYTRFTPHYITWYCPEAFLASRQCKTQCINGGRYCAPDPEQDFSRGYNGKDVIIQNLRQACFFRVTNESGKPWLWWDYVTDFAIRCPMKEEKYNKKCADQVIQSLGVDVKKIDKCIGDIDANAENPVLKEEQVAQVGKGSRGDVTILPTIVINNRQYRGKLQRSAVLKALCSGFRETTEPPICLTEDIETNECLQNNGGCWEDKTTNITACRDTFRGRVCQCPIVQGVKFLGDGYTHCEASGALRCGINNGGCWKQTQMGKTYSACRDDHSKGCKCPPGFIGDGLKECKDVNECEEKTACQCRDCKCKNTWGSYECSCSGSLLYIREHDICINRDARGDFSWGVIWIIIMGLGAAALGAYTVYKYRIRTYMDSEIRAIMAQYMPLDNNPNTQLSSQLEL.

Positions 1–19 (MRTTNVWLVVIVWVTVGWS) are cleaved as a signal peptide. Over 20–567 (SCTGRFVVEK…INRDARGDFS (548 aa)) the chain is Lumenal. Residues 55–167 (QYGGSMSGAV…SLGSAIKTAI (113 aa)) enclose the PA domain. 3 N-linked (GlcNAc...) asparagine glycosylation sites follow: Asn-147, Asn-293, and Asn-433. 2 EGF-like domains span residues 415–465 (ETNE…THCE) and 468–515 (GALR…KECK). 7 cysteine pairs are disulfide-bonded: Cys-419-Cys-437, Cys-426-Cys-446, Cys-448-Cys-464, Cys-472-Cys-492, Cys-479-Cys-500, Cys-502-Cys-514, and Cys-544-Cys-557. One can recognise an EGF-like 3; calcium-binding domain in the interval 516–558 (DVNECEEKTACQCRDCKCKNTWGSYECSCSGSLLYIREHDICI). Residues 568–588 (WGVIWIIIMGLGAAALGAYTV) form a helical membrane-spanning segment. The Cytoplasmic portion of the chain corresponds to 589–625 (YKYRIRTYMDSEIRAIMAQYMPLDNNPNTQLSSQLEL). The short motif at 608–611 (YMPL) is the Tyrosine-based internalization motif element.

It belongs to the VSR (BP-80) family. Expressed only in flowers.

The protein resides in the membrane. The protein localises to the golgi apparatus membrane. It localises to the cytoplasmic vesicle. Its subcellular location is the clathrin-coated vesicle membrane. It is found in the prevacuolar compartment membrane. In terms of biological role, vacuolar-sorting receptor (VSR) involved in clathrin-coated vesicles sorting from Golgi apparatus to vacuoles. In Arabidopsis thaliana (Mouse-ear cress), this protein is Vacuolar-sorting receptor 2.